The sequence spans 559 residues: Dihydroxy-acid dehydratase (559 aa).

A Mg(2+)-binding site is contributed by D81. Position 122 (C122) interacts with [2Fe-2S] cluster. Mg(2+) is bound by residues D123 and K124. At K124 the chain carries N6-carboxylysine. A [2Fe-2S] cluster-binding site is contributed by C195. E448 provides a ligand contact to Mg(2+). S474 (proton acceptor) is an active-site residue.

This sequence belongs to the IlvD/Edd family. As to quaternary structure, homodimer. [2Fe-2S] cluster serves as cofactor. The cofactor is Mg(2+).

It carries out the reaction (2R)-2,3-dihydroxy-3-methylbutanoate = 3-methyl-2-oxobutanoate + H2O. It catalyses the reaction (2R,3R)-2,3-dihydroxy-3-methylpentanoate = (S)-3-methyl-2-oxopentanoate + H2O. It participates in amino-acid biosynthesis; L-isoleucine biosynthesis; L-isoleucine from 2-oxobutanoate: step 3/4. The protein operates within amino-acid biosynthesis; L-valine biosynthesis; L-valine from pyruvate: step 3/4. Its function is as follows. Functions in the biosynthesis of branched-chain amino acids. Catalyzes the dehydration of (2R,3R)-2,3-dihydroxy-3-methylpentanoate (2,3-dihydroxy-3-methylvalerate) into 2-oxo-3-methylpentanoate (2-oxo-3-methylvalerate) and of (2R)-2,3-dihydroxy-3-methylbutanoate (2,3-dihydroxyisovalerate) into 2-oxo-3-methylbutanoate (2-oxoisovalerate), the penultimate precursor to L-isoleucine and L-valine, respectively. This is Dihydroxy-acid dehydratase from Geobacillus kaustophilus (strain HTA426).